The sequence spans 189 residues: uncharacterized protein (189 aa).

Residues 31–54 (KCENIDDLANRYEVSKQEVEKVFK) are a coiled coil. EF-hand domains lie at 47–82 (QEVE…LGID), 83–118 (VSPK…KIKL), 120–155 (TVKA…TVST), and 157–189 (ITVK…CQTV). Ca(2+) contacts are provided by Asp-60, Asp-62, Ser-64, Thr-66, Glu-71, Asp-96, Ser-98, Asp-100, Gln-102, Glu-107, Asp-133, Asn-135, Glu-137, and Glu-144.

This is an uncharacterized protein from Caenorhabditis elegans.